Here is a 301-residue protein sequence, read N- to C-terminus: Protein FAM221A (301 aa).

Positions 235–271 (MHAPSTSSPQPLAGGNEVGPSTQLSSLRKPEEDDMAY) are disordered.

It belongs to the FAM221 family.

This chain is Protein FAM221A (Fam221a), found in Mus musculus (Mouse).